The chain runs to 82 residues: Large ribosomal subunit protein bL27c (82 aa).

Positions 1–22 (MAHKKGAGSTKNGRDSNSKRLG) are disordered.

The protein belongs to the bacterial ribosomal protein bL27 family.

It localises to the plastid. The protein localises to the chloroplast. The protein is Large ribosomal subunit protein bL27c (rpl27) of Chrysotila carterae (Marine alga).